The sequence spans 170 residues: Sec-independent protein translocase protein TatB (170 aa).

A helical membrane pass occupies residues 1-21; sequence MIDLGISKLALIGAVALIVIG.

The protein belongs to the TatB family. The Tat system comprises two distinct complexes: a TatABC complex, containing multiple copies of TatA, TatB and TatC subunits, and a separate TatA complex, containing only TatA subunits. Substrates initially bind to the TatABC complex, which probably triggers association of the separate TatA complex to form the active translocon.

The protein localises to the cell inner membrane. In terms of biological role, part of the twin-arginine translocation (Tat) system that transports large folded proteins containing a characteristic twin-arginine motif in their signal peptide across membranes. Together with TatC, TatB is part of a receptor directly interacting with Tat signal peptides. TatB may form an oligomeric binding site that transiently accommodates folded Tat precursor proteins before their translocation. This is Sec-independent protein translocase protein TatB from Cupriavidus necator (strain ATCC 17699 / DSM 428 / KCTC 22496 / NCIMB 10442 / H16 / Stanier 337) (Ralstonia eutropha).